Here is a 467-residue protein sequence, read N- to C-terminus: MSDNIGKVVQVMGPVVDVEFEPGKLPAILTALLITNTVINDEADNLVVEVAQHLGDNVVRTIAMDVTDGLVRGMPVKDTGAPITMPVGAASLGRVLNVVGKPVDGLGPVSREKTMPIHRPAPLFTEQDTSVNVLETGIKVIDLLVPFPRGGKMGLFGGAGVGKTVIMMEMVNNIAMQHGGISVFAGVGERTREGNDLYHEMKDSGVLPKAALIYGQMTEPPGARARVALSALTCAEYFRDVEGQDVLIFIDNIFRFTQAGAEVSALLGRIPSAVGYQPTLAVDLGGLQERITSTDKGSITAVQCVYVPADDLTDPAPATTFAHLDGTVVLSRQIAELGIYPSVDPLDSTSRILDAAYIGEEHYRVAREVQQTLQKYKELQDIIAILGMDELSDEDKVTVERARKLQRFLSQPFHVAEVFTGKPGSYVKIEDTVRSFKEICDGKHDDLPESAFYMVGSIEEAVAKAKG.

157–164 (GGAGVGKT) contributes to the ATP binding site.

Belongs to the ATPase alpha/beta chains family. F-type ATPases have 2 components, CF(1) - the catalytic core - and CF(0) - the membrane proton channel. CF(1) has five subunits: alpha(3), beta(3), gamma(1), delta(1), epsilon(1). CF(0) has three main subunits: a(1), b(2) and c(9-12). The alpha and beta chains form an alternating ring which encloses part of the gamma chain. CF(1) is attached to CF(0) by a central stalk formed by the gamma and epsilon chains, while a peripheral stalk is formed by the delta and b chains.

The protein localises to the cell inner membrane. It catalyses the reaction ATP + H2O + 4 H(+)(in) = ADP + phosphate + 5 H(+)(out). In terms of biological role, produces ATP from ADP in the presence of a proton gradient across the membrane. The catalytic sites are hosted primarily by the beta subunits. The protein is ATP synthase subunit beta of Desulfosudis oleivorans (strain DSM 6200 / JCM 39069 / Hxd3) (Desulfococcus oleovorans).